We begin with the raw amino-acid sequence, 532 residues long: MGIISHSIVQCGKWQAGPARRQVVFRVHRRCFKMSEALRHLKNGETDLSSLPSGLDSIPRRIHTARGVDDSFSYRHPVLPQVVVLSDAFCVCLAVVACIAWQRIYDTPDELSGALLLANIMAAGAFFLFPKNVPLLDIPDITKVSVQIRYLLPPVAFGEVVFCTVLVMLSWPFGVTVRMGMEWLTFVVAILFVERCVGTYILHTPTMTRRLARKVAIIGSGSEATQMATRINTRMQRMFRLVGTFDDQGGDSDGTVEELVLRAREDHIDAVIICFPPACGQQHVMDVLWRLRGVLADVYVVPSLMTEDCHGWPVERFGPFSLTVLQRRPLSEWDMLEKRAFDLTASVLLLLALAPLLTLVALAIKLDSRGPVLFCQPRQGFNNRYFNVFKFRSMYTDMSDLDAARQTSRTDPRVTRIGRWIRRLSIDELPQLFNVLRGEMSLVGPRPHAPQTRAGGQLLHEAMEEYVARHRVQPGITGWAQINGSRGELVTRDDLCRRVVLDLEYIRAWSIWLDIKIIFLTIKREIFSRNAF.

Helical transmembrane passes span 81–101 (QVVV…CIAW), 110–130 (ELSG…FLFP), 155–175 (VAFG…PFGV), 183–203 (WLTF…YILH), and 344–364 (TASV…ALAI).

This sequence belongs to the bacterial sugar transferase family.

Its subcellular location is the membrane. The catalysed reaction is di-trans,octa-cis-undecaprenyl phosphate + UDP-alpha-D-glucose = alpha-D-glucosyl di-trans,octa-cis-undecaprenyl diphosphate + UMP. In terms of biological role, involved in the biosynthesis of the exopolysaccharide acetan, a water-soluble polysaccharide involved in production of bacterial cellulose (BC). This chain is Undecaprenyl-phosphate glucose phosphotransferase (aceA), found in Komagataeibacter xylinus (Gluconacetobacter xylinus).